The chain runs to 152 residues: Small ribosomal subunit protein uS13 (152 aa).

Belongs to the universal ribosomal protein uS13 family. In terms of assembly, component of the small ribosomal subunit.

It localises to the cytoplasm. Functionally, component of the small ribosomal subunit. The ribosome is a large ribonucleoprotein complex responsible for the synthesis of proteins in the cell. Plays an essential role in early embryonic development. In Danio rerio (Zebrafish), this protein is Small ribosomal subunit protein uS13 (rps18).